A 664-amino-acid chain; its full sequence is Type IV inositol polyphosphate 5-phosphatase 3 (664 aa).

A disordered region spans residues 35 to 76; that stretch reads GRDPEYGADTDNESENEDAREDNDDSSSDEEGGSGSRGRESK. Positions 40–66 are enriched in acidic residues; it reads YGADTDNESENEDAREDNDDSSSDEEG. 2 catalytic regions span residues 514 to 529 and 592 to 607; these read ERIIWLGDLNYRLSSS and PKRTPAWCDRVLSYGK.

Belongs to the inositol polyphosphate 5-phosphatase family.

The enzyme catalyses a 1,2-diacyl-sn-glycero-3-phospho-(1D-myo-inositol-4,5-bisphosphate) + H2O = a 1,2-diacyl-sn-glycero-3-phospho-(1D-myo-inositol 4-phosphate) + phosphate. It catalyses the reaction a 1,2-diacyl-sn-glycero-3-phospho-(1D-myo-inositol-3,4,5-trisphosphate) + H2O = a 1,2-diacyl-sn-glycero-3-phospho-(1D-myo-inositol-3,4-bisphosphate) + phosphate. Its function is as follows. Has phosphatase activity toward PtdIns(4,5)P2 and PtdIns(3,4,5)P3. This Arabidopsis thaliana (Mouse-ear cress) protein is Type IV inositol polyphosphate 5-phosphatase 3.